Consider the following 104-residue polypeptide: Cytochrome c-552 (104 aa).

The signal sequence occupies residues 1–23; that stretch reads MHLHLRGICLVLAVASSSSSALA. Heme c contacts are provided by C37, C40, H41, and M82.

This sequence belongs to the cytochrome c family. As to quaternary structure, monoheme monomer. Has the tendency to dimerize. In terms of processing, binds 1 heme c group covalently per subunit.

The protein localises to the periplasm. This chain is Cytochrome c-552 (cycB), found in Bradyrhizobium diazoefficiens (strain JCM 10833 / BCRC 13528 / IAM 13628 / NBRC 14792 / USDA 110).